Consider the following 253-residue polypeptide: Maleate isomerase (253 aa).

Substrate is bound by residues Asn-14, Cys-80–Val-82, Tyr-137, and Asn-167. The Nucleophile role is filled by Cys-80. Position 80 is an S-(2-succinyl)cysteine (Cys-80). Cys-198 functions as the Proton donor in the catalytic mechanism. Val-199–Gln-200 is a substrate binding site.

It belongs to the maleate isomerase family. In terms of assembly, homodimer.

It catalyses the reaction maleate = fumarate. Its function is as follows. Catalyzes cis-trans isomerization of the C2-C3 double bond in maleate to yield fumarate. This chain is Maleate isomerase, found in Alcaligenes faecalis.